A 224-amino-acid chain; its full sequence is Proteasome subunit beta (224 aa).

A propeptide spans 1-6 (MDVMKG) (removed in mature form; by autocatalysis). Thr-7 functions as the Nucleophile in the catalytic mechanism.

It belongs to the peptidase T1B family. As to quaternary structure, the 20S proteasome core is composed of 14 alpha and 14 beta subunits that assemble into four stacked heptameric rings, resulting in a barrel-shaped structure. The two inner rings, each composed of seven catalytic beta subunits, are sandwiched by two outer rings, each composed of seven alpha subunits. The catalytic chamber with the active sites is on the inside of the barrel. Has a gated structure, the ends of the cylinder being occluded by the N-termini of the alpha-subunits. Is capped at one or both ends by the proteasome regulatory ATPase, PAN.

The protein resides in the cytoplasm. It catalyses the reaction Cleavage of peptide bonds with very broad specificity.. The formation of the proteasomal ATPase PAN-20S proteasome complex, via the docking of the C-termini of PAN into the intersubunit pockets in the alpha-rings, triggers opening of the gate for substrate entry. Interconversion between the open-gate and close-gate conformations leads to a dynamic regulation of the 20S proteasome proteolysis activity. Functionally, component of the proteasome core, a large protease complex with broad specificity involved in protein degradation. This Methanocaldococcus sp. (strain FS406-22) protein is Proteasome subunit beta.